The following is a 572-amino-acid chain: Moesin/ezrin/radixin homolog 1 (572 aa).

In terms of domain architecture, FERM spans M1 to R291. Residues T456–D491 form a disordered region. Residues E466–V477 are compositionally biased toward acidic residues. Position 553 is a phosphothreonine (T553).

Interacts with cytoskeletal actin.

The protein localises to the cell junction. Its subcellular location is the adherens junction. The protein resides in the cell projection. It is found in the microvillus. It localises to the rhabdomere. The protein localises to the cell membrane. Its subcellular location is the cytoplasm. The protein resides in the cytoskeleton. Functionally, involved in connections of major cytoskeletal structures to the plasma membrane. The protein is Moesin/ezrin/radixin homolog 1 of Culex quinquefasciatus (Southern house mosquito).